The sequence spans 1147 residues: Cellulose synthase-like protein D3 (1147 aa).

Disordered stretches follow at residues 1-33 (MSTGPGKKAIRNAGGVGGGAGPSAGGPRGPAGQ) and 259-281 (KLGGDGGGGGGGGPLPEQKPFKP). Composition is skewed to gly residues over residues 14–29 (GGVGGGAGPSAGGPRG) and 262–272 (GDGGGGGGGGP). A run of 2 helical transmembrane segments spans residues 292-312 (VISPYRIFIVIRMFVLLFYLT) and 322-342 (ALWLWGMSIVCELWFAFSWLL). Catalysis depends on residues D422 and D847. 6 helical membrane passes run 929–949 (IFLLVYCFIPALSLFSGFFIV), 954–974 (IAFLCYLLTMTITLVALGILE), 1001–1021 (LYAVVQGLLKVMAGIEISFTL), 1045–1065 (LLIPPITIGMVNIIAIAFAFA), 1075–1095 (WGKFIGGGFFSFWVLAHLNPF), and 1108–1128 (TIVFVWSGLLSITVSLLWVAI).

Belongs to the glycosyltransferase 2 family. Plant cellulose synthase-like D subfamily.

It is found in the golgi apparatus membrane. In terms of biological role, thought to be a Golgi-localized beta-glycan synthase that polymerize the backbones of noncellulosic polysaccharides (hemicelluloses) of plant cell wall. This Oryza sativa subsp. japonica (Rice) protein is Cellulose synthase-like protein D3 (CSLD3).